Consider the following 475-residue polypeptide: FAD-dependent monooxygenase sdgC (475 aa).

A signal peptide spans 1–23 (MDKRSFKVIVVGGSIAGLTLAHS). FAD is bound by residues glutamate 35, glycine 49, and arginine 126. N-linked (GlcNAc...) asparagine glycosylation occurs at asparagine 236. Position 330 (alanine 330) interacts with FAD. A helical membrane pass occupies residues 446 to 466 (ISGVLLLVIPIIALVYGYSVI).

This sequence belongs to the paxM FAD-dependent monooxygenase family. FAD is required as a cofactor.

It is found in the membrane. It functions in the pathway secondary metabolite biosynthesis. In terms of biological role, FAD-dependent monooxygenase; part of the gene cluster that mediates the biosynthesis of the polyenes aspernidgulenes. The carbon backbone of aspernidgulenes is synthesized by the HR-PKS sdgA, which accepts acetyl-CoA as the starter unit and performs malonyl-CoA extensions as well as regioselective methylation and reduction. The resulting nonaketide offloads the HR-PKS by intramolecular lactonization to yield the 5,6-dihydro-alpha-pyrone-containing hexaenoic acids preaspernidgulene A1 and A2. The FAD-dependent monooxygenase sdgC then installs the first epoxide on the penultimate double bond. Subsequently, the FAD-dependent monooxygenase sdgF presumably generates a ketone intermediate through Meinwald rearrangement involving a hydride shift. Next, sdgC introduces another epoxide on the last olefin of the ketone intermediate after E/Z isomerization. The epoxide hydrolase sdgD then catalyzes stereospecific cyclization of the 5,6-dihydro-alpha-pyrone and opening of the epoxide ring to form an oxygenated trimethylcyclopentanone and an oxabicyclo[2.2.1]heptane unit. Finally, the bicyclic unit undergoes hydrolytic cleavage, either spontaneously or catalyzed by sdgD, to assemble the dimethyl-gamma-lactone moiety in aspernidgulene A1. This chain is FAD-dependent monooxygenase sdgC, found in Emericella nidulans (strain FGSC A4 / ATCC 38163 / CBS 112.46 / NRRL 194 / M139) (Aspergillus nidulans).